Reading from the N-terminus, the 61-residue chain is Small ribosomal subunit protein uS14 (61 aa).

Zn(2+) is bound by residues Cys-24, Cys-27, Cys-40, and Cys-43.

Belongs to the universal ribosomal protein uS14 family. Zinc-binding uS14 subfamily. As to quaternary structure, part of the 30S ribosomal subunit. Contacts proteins S3 and S10. Zn(2+) serves as cofactor.

Its function is as follows. Binds 16S rRNA, required for the assembly of 30S particles and may also be responsible for determining the conformation of the 16S rRNA at the A site. The polypeptide is Small ribosomal subunit protein uS14 (Desulfovibrio desulfuricans (strain ATCC 27774 / DSM 6949 / MB)).